The sequence spans 336 residues: Biotin synthase (336 aa).

The region spanning G55–R288 is the Radical SAM core domain. 3 residues coordinate [4Fe-4S] cluster: C73, C77, and C80. [2Fe-2S] cluster contacts are provided by C152, C213, and K283.

This sequence belongs to the radical SAM superfamily. Biotin synthase family. Homodimer. It depends on [4Fe-4S] cluster as a cofactor. [2Fe-2S] cluster is required as a cofactor.

It catalyses the reaction (4R,5S)-dethiobiotin + (sulfur carrier)-SH + 2 reduced [2Fe-2S]-[ferredoxin] + 2 S-adenosyl-L-methionine = (sulfur carrier)-H + biotin + 2 5'-deoxyadenosine + 2 L-methionine + 2 oxidized [2Fe-2S]-[ferredoxin]. The protein operates within cofactor biosynthesis; biotin biosynthesis; biotin from 7,8-diaminononanoate: step 2/2. In terms of biological role, catalyzes the conversion of dethiobiotin (DTB) to biotin by the insertion of a sulfur atom into dethiobiotin via a radical-based mechanism. This Chlorobium limicola (strain DSM 245 / NBRC 103803 / 6330) protein is Biotin synthase.